A 208-amino-acid chain; its full sequence is Pyrophosphate-energized proton pump 2 (208 aa).

Helical transmembrane passes span 19-39 (AYPL…TFFV), 54-74 (GLIV…SFTI), 89-109 (GGNL…IVVI), 140-160 (LAVS…GIIA), and 167-187 (LFGT…IVAL).

The protein belongs to the H(+)-translocating pyrophosphatase (TC 3.A.10) family. As to quaternary structure, homodimer. It depends on Mg(2+) as a cofactor.

The protein localises to the cell inner membrane. The enzyme catalyses diphosphate + H2O + H(+)(in) = 2 phosphate + 2 H(+)(out). Proton pump that utilizes the energy of pyrophosphate hydrolysis as the driving force for proton movement across the membrane. Generates a proton motive force. In Mycoplana dimorpha, this protein is Pyrophosphate-energized proton pump 2 (hppA2).